Consider the following 743-residue polypeptide: Extensin-2 (743 aa).

Residues 1 to 22 form the signal peptide; it reads MGPSAHLISALGVIIMATMVAA. The disordered stretch occupies residues 46–93; the sequence is TPPLPYVDSSPPPTYTPAPEVEYKSPPPPYVYSSPPPPTYSPSPKVDY. Pro residues-rich tracts occupy residues 47 to 61 and 70 to 86; these read PPLP…PTYT and SPPP…PTYS. Tandem repeats lie at residues 70-78, 79-94, 95-103, 104-119, 120-128, 129-144, 145-153, 154-169, 170-178, 179-194, 195-203, 204-219, 220-228, 229-244, 245-253, 254-269, 270-278, 279-294, 295-303, 304-319, 320-328, 329-344, 345-353, 354-369, 370-378, 379-394, 395-403, 404-419, 420-428, 429-444, 445-453, 454-469, 470-478, 479-494, 495-503, 504-519, 520-528, 529-544, 545-553, 554-569, 570-578, 579-594, 595-603, 604-619, 620-628, 629-644, and 645-660. The segment at 70 to 628 is 23 X 9 AA repeats of S-P-P-P-P-Y-V-Y-[SN]; sequence SPPPPYVYSS…KSPPPPYVYS (559 aa). The segment at 79-660 is 24 X 16 AA repeats of S-P-P-P-P-[YT]-Y-S-P-S-P-K-V-[DEYH]-Y-K; it reads SPPPPTYSPS…YSPSPKVYYK (582 aa). A disordered region spans residues 715–743; the sequence is PPSYYSPSPKVEYKSPPPPSYSPSPKTEY.

The protein belongs to the extensin family. Post-translationally, extensins contain a characteristic repeat of the pentapeptide Ser-Pro(4). The proline residues are hydroxylated and then O-glycosylated (arabinosylation). Synthetised as soluble proteins which become insolubilised in the cell wall through the intermolecular cross-linking of Tyr on adjacent monomers. Isodityrosine (IDT) stabilizes and makes rigid the part of the polypeptide where IDT functional sites are present. In terms of tissue distribution, predominantly expressed in the roots.

It is found in the secreted. Its subcellular location is the primary cell wall. Structural component which strengthens the primary cell wall. The chain is Extensin-2 from Arabidopsis thaliana (Mouse-ear cress).